The sequence spans 139 residues: MAVLYTTLDSKFPSINRKITTRWIKQILIDYNKRAGDITCIFCSNDEILRINNFYLNHDCYTDIITFDYSKGDIISGDLFIALDMIKYNSMKYNVNYFEELYRVIIHGILHLCGFNDKLIKDIKVMREGENRALEKIRS.

3 residues coordinate Zn(2+): H107, H111, and D117.

It belongs to the endoribonuclease YbeY family. Zn(2+) is required as a cofactor.

The protein resides in the cytoplasm. In terms of biological role, single strand-specific metallo-endoribonuclease involved in late-stage 70S ribosome quality control and in maturation of the 3' terminus of the 16S rRNA. This chain is Endoribonuclease YbeY, found in Azobacteroides pseudotrichonymphae genomovar. CFP2.